The chain runs to 101 residues: Urease subunit beta (101 aa).

This sequence belongs to the urease beta subunit family. Heterotrimer of UreA (gamma), UreB (beta) and UreC (alpha) subunits. Three heterotrimers associate to form the active enzyme.

The protein localises to the cytoplasm. The catalysed reaction is urea + 2 H2O + H(+) = hydrogencarbonate + 2 NH4(+). It participates in nitrogen metabolism; urea degradation; CO(2) and NH(3) from urea (urease route): step 1/1. This is Urease subunit beta from Actinobacillus pleuropneumoniae serotype 7 (strain AP76).